A 329-amino-acid polypeptide reads, in one-letter code: Tetraacyldisaccharide 4'-kinase (329 aa).

Position 58–65 (58–65 (SVGGTGKT)) interacts with ATP.

It belongs to the LpxK family.

It catalyses the reaction a lipid A disaccharide + ATP = a lipid IVA + ADP + H(+). Its pathway is glycolipid biosynthesis; lipid IV(A) biosynthesis; lipid IV(A) from (3R)-3-hydroxytetradecanoyl-[acyl-carrier-protein] and UDP-N-acetyl-alpha-D-glucosamine: step 6/6. In terms of biological role, transfers the gamma-phosphate of ATP to the 4'-position of a tetraacyldisaccharide 1-phosphate intermediate (termed DS-1-P) to form tetraacyldisaccharide 1,4'-bis-phosphate (lipid IVA). The chain is Tetraacyldisaccharide 4'-kinase from Idiomarina loihiensis (strain ATCC BAA-735 / DSM 15497 / L2-TR).